Consider the following 368-residue polypeptide: Glutamine synthetase root isozyme 2 (368 aa).

The GS beta-grasp domain maps to 19 to 99 (IIAEYIWVGG…VMCDCYEPNG (81 aa)). The disordered stretch occupies residues 38-66 (RTLSGPVDDPSKLPKWNFDGSSTGQAPGD). One can recognise a GS catalytic domain in the interval 106–368 (KRHGAAKIFS…NGDGKGAAAP (263 aa)).

This sequence belongs to the glutamine synthetase family. As to quaternary structure, homooctamer. In terms of tissue distribution, found mainly in the vascular tissues of seedling roots.

The protein localises to the cytoplasm. It carries out the reaction L-glutamate + NH4(+) + ATP = L-glutamine + ADP + phosphate + H(+). Functionally, plays a role in the flow of nitrogen into nitrogenous organic compounds. This is Glutamine synthetase root isozyme 2 (GLN2) from Zea mays (Maize).